A 230-amino-acid polypeptide reads, in one-letter code: Ureidoacrylate amidohydrolase RutB (230 aa).

Catalysis depends on aspartate 24, which acts as the Proton acceptor. Lysine 133 is an active-site residue. Catalysis depends on cysteine 166, which acts as the Nucleophile.

Belongs to the isochorismatase family. RutB subfamily.

The enzyme catalyses (Z)-3-ureidoacrylate + H2O + H(+) = (Z)-3-aminoacrylate + NH4(+) + CO2. It catalyses the reaction (Z)-3-ureidoacrylate + H2O = (Z)-3-aminoacrylate + carbamate + H(+). It carries out the reaction (Z)-2-methylureidoacrylate + H2O + H(+) = (Z)-2-methylaminoacrylate + NH4(+) + CO2. In terms of biological role, hydrolyzes ureidoacrylate to form aminoacrylate and carbamate. The carbamate hydrolyzes spontaneously, thereby releasing one of the nitrogen atoms of the pyrimidine ring as ammonia and one of its carbon atoms as CO2. The chain is Ureidoacrylate amidohydrolase RutB from Escherichia coli O6:K15:H31 (strain 536 / UPEC).